A 145-amino-acid polypeptide reads, in one-letter code: Brain and acute leukemia cytoplasmic protein (145 aa).

Gly2 carries N-myristoyl glycine lipidation. Residue Cys3 is the site of S-palmitoyl cysteine attachment. Positions 3–35 are interaction with CAMK2A; that stretch reads CGGSRADAIEPRYYESWTRETESTWLTYTDSDA. A disordered region spans residues 27–119; that stretch reads WLTYTDSDAP…AKRDAKRMPA (93 aa). Over residues 32-46 the composition is skewed to low complexity; sequence DSDAPPSAAAPDSGP. Polar residues predominate over residues 83–108; sequence CETQCPNPQSLSSGPLTQKQNGLQTT. Basic and acidic residues predominate over residues 109-119; the sequence is EAKRDAKRMPA.

Interacts with CAMK2A. Palmitoylation and myristoylation target the protein to the lipid rafts. As to expression, predominantly expressed in neuroectoderm-derived tissues. Expressed in the brain and spinal cord, and at low levels, in the adrenal gland. In the bone marrow, confined to the CD34+ progenitor cells. Not found in peripheral blood mononuclear cells, nor lymph nodes. Tends to be expressed at high levels in acute myeloid leukemia and glioblastoma cells.

The protein localises to the cytoplasm. It is found in the synapse. Its subcellular location is the synaptosome. It localises to the membrane raft. The protein resides in the postsynaptic density. May play a synaptic role at the postsynaptic lipid rafts possibly through interaction with CAMK2A. This is Brain and acute leukemia cytoplasmic protein from Homo sapiens (Human).